A 217-amino-acid chain; its full sequence is GTP-binding protein Rit2 (217 aa).

Residues 27–34 (GAGGVGKS), 74–78 (DTAGQ), and 133–136 (NKID) contribute to the GTP site.

This sequence belongs to the small GTPase superfamily. Ras family. As to quaternary structure, interacts with PLXNB3. Interacts with AFDN, the C-terminal domain of RALGDS and RLF, but not with RIN1 and PIK3CA. RLF binds exclusively to the active GTP-bound form. Binds calmodulin. Interacts with POU4F1 (via N-terminus); the interaction controls POU4F1 transactivation activity on some neuronal target genes. In terms of tissue distribution, expressed in ganglion cell layer (GCL), inner plexiform layer (IPL) and inner nuclear layer (INL) of the retina. Expressed in retinal ganglion cells (RGCs). Expressed in horizontal, bipolar and amacrine cells, but not Mueller glia, of the INL (at protein level). Neuron-specific. Expressed in ganglion cell layer (GCL) and inner plexiform layer (IPL).

Its subcellular location is the nucleus. The protein localises to the cell membrane. The enzyme catalyses GTP + H2O = GDP + phosphate + H(+). Its activity is regulated as follows. Alternates between an inactive form bound to GDP and an active form bound to GTP. Its function is as follows. Binds and exchanges GTP and GDP. Binds and modulates the activation of POU4F1 as gene expression regulator. The protein is GTP-binding protein Rit2 (Rit2) of Mus musculus (Mouse).